The following is a 296-amino-acid chain: Aldo-keto reductase MYCFIDRAFT_156381 (296 aa).

An NADP(+)-binding site is contributed by Asp-14. The Proton donor role is filled by Tyr-19. Substrate is bound at residue His-83. NADP(+) contacts are provided by residues 113-114 (CN), Gln-139, 168-178 (SPLAGGMLTDR), and Arg-191. Residue Tyr-201 coordinates substrate. 255 to 263 (SSAEQLESN) is an NADP(+) binding site.

Belongs to the aldo/keto reductase family. Aldo/keto reductase 2 subfamily.

The protein operates within secondary metabolite biosynthesis. Its function is as follows. Aldo-keto reductase; part of the gene cluster that mediates the biosynthesis of an emodin derivative that may be involved in black Sigatoka disease of banana. The pathway begins with the synthesis of atrochrysone thioester by the polyketide synthase PKS8-1. The atrochrysone carboxyl ACP thioesterase MYCFIDRAFT_190111 then breaks the thioester bond and releases the atrochrysone carboxylic acid from PKS8-1. The decarboxylase MYCFIDRAFT_34057 then catalyzes the concerted decarboxylation-elimination required to convert atochrysone carboxylic acid into emodin anthrone, which is further oxidized to emodin by the anthrone oxygenase MYCFIDRAFT_34418. The functions of the other tailoring enzymes as well as the final product of the cluster have still to be identified. This chain is Aldo-keto reductase MYCFIDRAFT_156381, found in Pseudocercospora fijiensis (strain CIRAD86) (Black leaf streak disease fungus).